Reading from the N-terminus, the 334-residue chain is Glyceraldehyde-3-phosphate dehydrogenase (334 aa).

NAD(+)-binding positions include 12–13 (TI) and Gly111. D-glyceraldehyde 3-phosphate is bound at residue 140–142 (SCN). Cys141 acts as the Nucleophile in catalysis. Arg167 lines the NAD(+) pocket. 192 to 193 (HG) lines the D-glyceraldehyde 3-phosphate pocket. Gln298 contributes to the NAD(+) binding site.

The protein belongs to the glyceraldehyde-3-phosphate dehydrogenase family. As to quaternary structure, homotetramer.

It is found in the cytoplasm. It carries out the reaction D-glyceraldehyde 3-phosphate + phosphate + NADP(+) = (2R)-3-phospho-glyceroyl phosphate + NADPH + H(+). The enzyme catalyses D-glyceraldehyde 3-phosphate + phosphate + NAD(+) = (2R)-3-phospho-glyceroyl phosphate + NADH + H(+). Its pathway is carbohydrate degradation; glycolysis; pyruvate from D-glyceraldehyde 3-phosphate: step 1/5. The sequence is that of Glyceraldehyde-3-phosphate dehydrogenase from Thermococcus sibiricus (strain DSM 12597 / MM 739).